The chain runs to 365 residues: PDZ and LIM domain protein 3 (365 aa).

Residues 1-84 (MPQNVILPGP…QLCLKIDRAE (84 aa)) enclose the PDZ domain. At Ser-18 the chain carries Phosphoserine. The interval 126–156 (FIIPGRSSGCSTPSGIDGGSGRSTPSSVSTL) is disordered. The segment covering 147 to 156 (RSTPSSVSTL) has biased composition (polar residues). The LIM zinc-binding domain occupies 293–352 (PLCDKCGSGIVGAVVKARDKYRHPECFVCADCNLNLKQKGYFFVEGELYCETHARARMRP).

As to quaternary structure, interacts with ACTN2. Forms a heterodimer with PDLIM4 (via LIM domain).

The protein localises to the cytoplasm. It is found in the myofibril. It localises to the sarcomere. The protein resides in the z line. May play a role in the organization of actin filament arrays within muscle cells. This chain is PDZ and LIM domain protein 3 (PDLIM3), found in Sus scrofa (Pig).